Reading from the N-terminus, the 1155-residue chain is DNA-directed RNA polymerase subunit beta (1155 aa).

Belongs to the RNA polymerase beta chain family. In terms of assembly, the RNAP catalytic core consists of 2 alpha, 1 beta, 1 beta' and 1 omega subunit. When a sigma factor is associated with the core the holoenzyme is formed, which can initiate transcription.

The enzyme catalyses RNA(n) + a ribonucleoside 5'-triphosphate = RNA(n+1) + diphosphate. Its function is as follows. DNA-dependent RNA polymerase catalyzes the transcription of DNA into RNA using the four ribonucleoside triphosphates as substrates. This chain is DNA-directed RNA polymerase subunit beta, found in Borrelia hermsii (strain HS1 / DAH).